We begin with the raw amino-acid sequence, 459 residues long: Chromosomal replication initiator protein DnaA (459 aa).

The segment at 1–74 is domain I, interacts with DnaA modulators; the sequence is MMEMPIDNLW…ANVVQSILGH (74 aa). The tract at residues 74 to 117 is domain II; the sequence is HPVEIYITVAKGEEFEEIGGGGEWELPTTNIINETPNQNRQPNT. The segment at 118–334 is domain III, AAA+ region; sequence ELNAKYVFSR…GALTRALAYI (217 aa). 4 residues coordinate ATP: G162, G164, K165, and T166. Residues 335–459 are domain IV, binds dsDNA; sequence SIWGLPMTVA…IKMNSRSRKP (125 aa).

The protein belongs to the DnaA family. As to quaternary structure, oligomerizes as a right-handed, spiral filament on DNA at oriC.

The protein localises to the cytoplasm. Functionally, plays an essential role in the initiation and regulation of chromosomal replication. ATP-DnaA binds to the origin of replication (oriC) to initiate formation of the DNA replication initiation complex once per cell cycle. Binds the DnaA box (a 9 base pair repeat at the origin) and separates the double-stranded (ds)DNA. Forms a right-handed helical filament on oriC DNA; dsDNA binds to the exterior of the filament while single-stranded (ss)DNA is stabiized in the filament's interior. The ATP-DnaA-oriC complex binds and stabilizes one strand of the AT-rich DNA unwinding element (DUE), permitting loading of DNA polymerase. After initiation quickly degrades to an ADP-DnaA complex that is not apt for DNA replication. Binds acidic phospholipids. The protein is Chromosomal replication initiator protein DnaA of Nostoc sp. (strain PCC 7120 / SAG 25.82 / UTEX 2576).